The primary structure comprises 208 residues: MIVIIDYDTGNTKSISKALDFIGLQNKISSNHAEILQADGVILPGVGAFPEAMQELGRRGLDVTLKEMAESGKPMLGVCLGMQLLLESSDEHLFTKGLGLIPGHVEKLPDEPGFAVPHMGWNQLEIKRSTPLTKKLGGEYVYYVHSYYANCPNEYIIATSGYSVEVPSMINKGNIYGAQFHPEKSGQIGLEILKGFKEVTESCKSSQQ.

The region spanning 1-206 (MIVIIDYDTG…KEVTESCKSS (206 aa)) is the Glutamine amidotransferase type-1 domain. The Nucleophile role is filled by Cys-79. Residues His-181 and Glu-183 contribute to the active site.

Heterodimer of HisH and HisF.

It is found in the cytoplasm. The enzyme catalyses 5-[(5-phospho-1-deoxy-D-ribulos-1-ylimino)methylamino]-1-(5-phospho-beta-D-ribosyl)imidazole-4-carboxamide + L-glutamine = D-erythro-1-(imidazol-4-yl)glycerol 3-phosphate + 5-amino-1-(5-phospho-beta-D-ribosyl)imidazole-4-carboxamide + L-glutamate + H(+). The catalysed reaction is L-glutamine + H2O = L-glutamate + NH4(+). It functions in the pathway amino-acid biosynthesis; L-histidine biosynthesis; L-histidine from 5-phospho-alpha-D-ribose 1-diphosphate: step 5/9. In terms of biological role, IGPS catalyzes the conversion of PRFAR and glutamine to IGP, AICAR and glutamate. The HisH subunit catalyzes the hydrolysis of glutamine to glutamate and ammonia as part of the synthesis of IGP and AICAR. The resulting ammonia molecule is channeled to the active site of HisF. The chain is Imidazole glycerol phosphate synthase subunit HisH from Listeria innocua serovar 6a (strain ATCC BAA-680 / CLIP 11262).